The following is a 391-amino-acid chain: Coproporphyrin III ferrochelatase (391 aa).

Fe-coproporphyrin III-binding residues include serine 79 and tyrosine 148. Fe(2+) is bound by residues histidine 211 and glutamate 305.

The protein belongs to the ferrochelatase family.

It is found in the cytoplasm. It catalyses the reaction Fe-coproporphyrin III + 2 H(+) = coproporphyrin III + Fe(2+). It participates in porphyrin-containing compound metabolism; protoheme biosynthesis. Its function is as follows. Involved in coproporphyrin-dependent heme b biosynthesis. Catalyzes the insertion of ferrous iron into coproporphyrin III to form Fe-coproporphyrin III. The polypeptide is Coproporphyrin III ferrochelatase (Tropheryma whipplei (strain TW08/27) (Whipple's bacillus)).